We begin with the raw amino-acid sequence, 633 residues long: E3 ubiquitin-protein ligase ZSWIM2 (633 aa).

The SWIM-type zinc finger occupies Phe-54–Phe-87. The RING-type 1 zinc-finger motif lies at Cys-147–Arg-198. Residues His-229–Gln-280 form a ZZ-type zinc finger. The Zn(2+) site is built by Cys-234, Cys-237, Cys-249, Cys-252, Cys-258, Cys-261, His-267, and His-270. An RING-type 2 zinc finger spans residues Cys-344 to Val-388.

As to quaternary structure, dimer. Interacts with UBE2D1. Post-translationally, polyubiquitinated. Polyubiquitination is followed by degradation via the proteasome. As to expression, expression is testis-specific.

The catalysed reaction is S-ubiquitinyl-[E2 ubiquitin-conjugating enzyme]-L-cysteine + [acceptor protein]-L-lysine = [E2 ubiquitin-conjugating enzyme]-L-cysteine + N(6)-ubiquitinyl-[acceptor protein]-L-lysine.. In terms of biological role, E3 ubiquitin-protein ligase involved in the regulation of Fas-, DR3- and DR4-mediated apoptosis. Functions in conjunction with the UBE2D1, UBE2D3 and UBE2E1 E2 ubiquitin-conjugating enzymes. This is E3 ubiquitin-protein ligase ZSWIM2 from Homo sapiens (Human).